The following is a 2017-amino-acid chain: Protein cbp-1 (2017 aa).

The segment covering 1 to 13 has biased composition (basic and acidic residues); sequence MDEPPSKKSRADS. Residues 1 to 182 form a disordered region; that stretch reads MDEPPSKKSR…PGMFQGDQQQ (182 aa). Low complexity-rich tracts occupy residues 21-30 and 78-90; these read ALSALESLEA and QPGQ…PPQN. Residues 106–116 show a composition bias toward polar residues; that stretch reads NPSQTSNNSPR. Residues 141–151 are compositionally biased toward low complexity; it reads MMSPPSMGRVP. The segment covering 152–164 has biased composition (pro residues); sequence GPSPGGPQPPGPG. Positions 165–182 are enriched in low complexity; it reads QPQMRPGQPGMFQGDQQQ. R234 is subject to Symmetric dimethylarginine; by PRMT5; in vitro. Residues 307 to 398 are disordered; that stretch reads SNGQPIRGPN…PGSSMLATHQ (92 aa). Low complexity predominate over residues 340-379; sequence QAAAAQHAAQQQAAAQAQAQAAAQQQQQQQREQEAAAAAQ. The segment at 399–505 adopts a TAZ-type 1 zinc-finger fold; sequence DPEKRKLIQQ…REDCPVCKPL (107 aa). Disordered regions lie at residues 558 to 593 and 706 to 864; these read EGFN…DMPD and GRSD…DTVF. Residues 559–573 are compositionally biased toward low complexity; sequence GFNGNPFQNGPNRGG. Residues 593 to 672 enclose the KIX domain; it reads DCTKEWHHQV…KIYKIQKELQ (80 aa). A compositionally biased stretch (polar residues) spans 721–773; that stretch reads PSQQNQPWGGAPNSNMHQQIPPNGQVPQVNNSSTFPSSGNSTPNIGASSTVSA. Residues 834-854 are compositionally biased toward basic and acidic residues; sequence KDTKDGVAESKPKEQQAKREP. The region spanning 864–970 is the Bromo domain; it reads FSQEDLIKFL…EMFVSEMDPV (107 aa). Interaction with histone regions lie at residues 902–948 and 1224–1226; these read DYHE…YNRK and YLD. The CBP/p300-type HAT domain maps to 1112 to 1492; the sequence is KYLASKLPHN…LAYSLHETDS (381 aa). Residues 1225–1227, 1237–1238, I1284, R1289, and W1293 each bind acetyl-CoA; these read LDS and RT. Positions 1349 to 1358 are enriched in basic and acidic residues; the sequence is NEEAQRKVKE. A disordered region spans residues 1349-1401; it reads NEEAQRKVKEDDDDGEDADGGLGGGDSGKKKSSKNKKNNLKKNAKMNKKKAGS. The segment covering 1378-1399 has biased composition (basic residues); that stretch reads KKSSKNKKNNLKKNAKMNKKKA. The ZZ-type zinc-finger motif lies at 1494-1540; the sequence is GMEYTCNKCSSPAVWHCQSCDDFDLCDGCKPTTQHPHEMEKIKSLIG. 8 residues coordinate Zn(2+): C1499, C1502, C1510, C1513, C1519, C1522, H1528, and H1530. A TAZ-type 2 zinc finger spans residues 1550-1631; it reads GGTRYESIQR…ACTVPFCMNI (82 aa). Disordered regions lie at residues 1656–1828 and 1908–2017; these read GLQS…QPVR and SQMS…AGGQ. Residues 1667–1678 show a composition bias toward polar residues; it reads TPSTVSNGTPSN. Low complexity predominate over residues 1699–1708; the sequence is QVQMQQHQGS. The span at 1748-1757 shows a compositional bias: polar residues; that stretch reads PQMNANQSRY. 2 stretches are compositionally biased toward low complexity: residues 1793 to 1812 and 1908 to 1932; these read MNPQ…QNPG and SQMS…QAGA. Positions 1943 to 1962 are enriched in polar residues; sequence QNNSQPRAPSGQFASMNPSM. Residues 1963-2017 are compositionally biased toward low complexity; the sequence is QQQYPQQQQGWPQQRQQNPGGMQQNANPYNQFQNRQNMMMMPQQQQPHPSNAGGQ.

As to quaternary structure, interacts (via N-terminus domain and HAT domain) with prmt-5; the interaction results in methylation of cbp-1. Interacts (via HAT domain) with cep-1; cep-1 transcriptional activity may be inhibited by interaction with methylated cbp-1. Component of a complex that contains prmt-5 and cbp-1. Methylation by prmt-5 may repress the capacity of cbp-1 to enhance cep-1-dependent transcription of egl-1.

The protein resides in the nucleus. It catalyses the reaction L-lysyl-[protein] + acetyl-CoA = N(6)-acetyl-L-lysyl-[protein] + CoA + H(+). Its function is as follows. Acetyltransferase enzyme. Acetylates histones, giving a specific tag for transcriptional activation. May prevent DNA damage-induced apoptosis by inhibiting cep-1-dependent transcription activation of the programmed cell death activator egl-1. In differentiated cells, negatively regulates localization of heterochromatin to the nuclear periphery. Plays a role in migration of gonadal distal tip cells, where it probably modulates expression of genes involved in integrin-mediated adhesion. This is Protein cbp-1 (cbp-1) from Caenorhabditis elegans.